Consider the following 152-residue polypeptide: Transcriptional repressor NrdR (152 aa).

A zinc finger spans residues 3 to 34 (CPYCQHPDSDVIDTRKLHNGETIRRRRKCEAC). The region spanning 49-139 (ITVVKKNGER…VYRSFADIGK (91 aa)) is the ATP-cone domain.

This sequence belongs to the NrdR family. It depends on Zn(2+) as a cofactor.

In terms of biological role, negatively regulates transcription of bacterial ribonucleotide reductase nrd genes and operons by binding to NrdR-boxes. This chain is Transcriptional repressor NrdR, found in Roseiflexus castenholzii (strain DSM 13941 / HLO8).